The sequence spans 247 residues: Homeobox-leucine zipper protein HOX17 (247 aa).

Positions 58–81 (ERAGLRGGGGSDEEDGGCGIDGSR) are disordered. Positions 79-138 (GSRKKLRLSKDQSAVLEDSFREHPTLNPRQKATLAQQLGLRPRQVEVWFQNRRARTKLKQ) form a DNA-binding region, homeobox. Residues 137–182 (KQTEVDCEFLKRCCETLTEENRRLQKEVQELRALKLVSPHLYMNMS) are leucine-zipper.

It belongs to the HD-ZIP homeobox family. Class II subfamily. In terms of tissue distribution, expressed in seedlings, roots, stems, leaf sheaths and blades and panicles.

The protein localises to the nucleus. Probable transcription factor. In Oryza sativa subsp. japonica (Rice), this protein is Homeobox-leucine zipper protein HOX17 (HOX17).